A 65-amino-acid chain; its full sequence is MAKKDQLTLRGPLYGNNRSHSKTITRRKWNVNLQPCKVKTADGKTTRILVSTRTLRTLKKHNRLS.

A disordered region spans residues 1-21; that stretch reads MAKKDQLTLRGPLYGNNRSHS.

The protein belongs to the bacterial ribosomal protein bL28 family.

This is Large ribosomal subunit protein bL28 from Mycoplasma pneumoniae (strain ATCC 29342 / M129 / Subtype 1) (Mycoplasmoides pneumoniae).